Reading from the N-terminus, the 345-residue chain is Anthranilate phosphoribosyltransferase (345 aa).

5-phospho-alpha-D-ribose 1-diphosphate is bound by residues Gly-88, 91 to 92 (GD), Thr-96, 98 to 101 (NIST), 116 to 124 (KHGNRSASG), and Ser-128. Gly-88 is a binding site for anthranilate. Ser-100 contacts Mg(2+). Anthranilate is bound at residue Asn-119. Arg-174 contacts anthranilate. Residues Asp-233 and Glu-234 each coordinate Mg(2+).

It belongs to the anthranilate phosphoribosyltransferase family. Homodimer. It depends on Mg(2+) as a cofactor.

It catalyses the reaction N-(5-phospho-beta-D-ribosyl)anthranilate + diphosphate = 5-phospho-alpha-D-ribose 1-diphosphate + anthranilate. The protein operates within amino-acid biosynthesis; L-tryptophan biosynthesis; L-tryptophan from chorismate: step 2/5. In terms of biological role, catalyzes the transfer of the phosphoribosyl group of 5-phosphorylribose-1-pyrophosphate (PRPP) to anthranilate to yield N-(5'-phosphoribosyl)-anthranilate (PRA). The chain is Anthranilate phosphoribosyltransferase from Prochlorococcus marinus (strain NATL1A).